We begin with the raw amino-acid sequence, 225 residues long: Imidazoleglycerol-phosphate dehydratase (225 aa).

The protein belongs to the imidazoleglycerol-phosphate dehydratase family.

It catalyses the reaction D-erythro-1-(imidazol-4-yl)glycerol 3-phosphate = 3-(imidazol-4-yl)-2-oxopropyl phosphate + H2O. It functions in the pathway amino-acid biosynthesis; L-histidine biosynthesis; L-histidine from 5-phospho-alpha-D-ribose 1-diphosphate: step 6/9. The protein is Imidazoleglycerol-phosphate dehydratase (PTH3) of Pyricularia oryzae (strain 70-15 / ATCC MYA-4617 / FGSC 8958) (Rice blast fungus).